The chain runs to 288 residues: Single myb histone 4 (288 aa).

3 disordered regions span residues Met1–Ser42, Gly62–Leu87, and Asp181–Lys206. The HTH myb-type domain maps to Met1–Ala60. The segment at residues Trp28 to Leu56 is a DNA-binding region (H-T-H motif). Low complexity predominate over residues Pro76–Leu87. In terms of domain architecture, H15 spans Thr113–Asp181. The stretch at Lys230–Arg250 forms a coiled coil.

Belongs to the histone H1/H5 family. SMH subfamily. Forms a homodimer and heterodimers.

It is found in the nucleus. The protein resides in the chromosome. The protein localises to the nucleolus. Its subcellular location is the telomere. Binds preferentially double-stranded telomeric repeats, but may also bind to the single telomeric strand. This chain is Single myb histone 4 (SMH4), found in Zea mays (Maize).